Consider the following 68-residue polypeptide: Basic phospholipase A2 homolog BdipTx-I (68 aa).

C28 and C44 are disulfide-bonded.

This sequence belongs to the phospholipase A2 family. Group II subfamily. K49 sub-subfamily. As to expression, expressed by the venom gland.

Its subcellular location is the secreted. In terms of biological role, snake venom phospholipase A2 (PLA2) that lacks enzymatic activity. Is myotoxic, induces edema, and causes systemic effects (renal changes that lead to proteinuria) on mice. A model of myotoxic mechanism has been proposed: an apo Lys49-PLA2 is activated by the entrance of a hydrophobic molecule (e.g. fatty acid) at the hydrophobic channel of the protein leading to a reorientation of a monomer. This reorientation causes a transition between 'inactive' to 'active' states, causing alignment of C-terminal and membrane-docking sites (MDoS) side-by-side and putting the membrane-disruption sites (MDiS) in the same plane, exposed to solvent and in a symmetric position for both monomers. The MDoS region stabilizes the toxin on membrane by the interaction of charged residues with phospholipid head groups. Subsequently, the MDiS region destabilizes the membrane with penetration of hydrophobic residues. This insertion causes a disorganization of the membrane, allowing an uncontrolled influx of ions (i.e. calcium and sodium), and eventually triggering irreversible intracellular alterations and cell death. This Bothrops diporus (Chaco lancehead) protein is Basic phospholipase A2 homolog BdipTx-I.